A 301-amino-acid polypeptide reads, in one-letter code: Small ribosomal subunit protein uS2 (301 aa).

The tract at residues 237–301 (PTESWNDTVV…QDWSNSTSQW (65 aa)) is disordered. Over residues 264–278 (PQYAPAPQAAAAPVA) the composition is skewed to low complexity.

Belongs to the universal ribosomal protein uS2 family. As to quaternary structure, component of the small ribosomal subunit. Mature ribosomes consist of a small (40S) and a large (60S) subunit. The 40S subunit contains about 33 different proteins and 1 molecule of RNA (18S). The 60S subunit contains about 49 different proteins and 3 molecules of RNA (28S, 5.8S and 5S). Interacts with ribosomal protein S21.

It is found in the cytoplasm. In terms of biological role, required for the assembly and/or stability of the 40S ribosomal subunit. Required for the processing of the 20S rRNA-precursor to mature 18S rRNA in a late step of the maturation of 40S ribosomal subunits. The chain is Small ribosomal subunit protein uS2 from Diaphorina citri (Asian citrus psyllid).